The chain runs to 546 residues: MANNSPALTGNSQPQHQAAAAAAQQQQQCGGGGATKPAVSGKQGNVLPLWGNEKTMNLNPMILTNILSSPYFKVQLYELKTYHEVVDEIYFKVTHVEPWEKGSRKTAGQTGMCGGVRGVGTGGIVSTAFCLLYKLFTLKLTRKQVMGLITHTDSPYIRALGFMYIRYTQPPTDLWDWFESFLDDEEDLDVKAGGGCVMTIGEMLRSFLTKLEWFSTLFPRIPVPVQKNIDQQIKTRPRKIKKDGKEGAEEIDRHVERRRSRSPRRSLSPRRSPRRSRSRSHHREGHGSSSFDRELEREKERQRLEREAKEREKERRRSRSIDRGLERRRSRSRERHRSRSRSRDRKGDRRDRDREREKENERGRRRDRDYDKERGNEREKERERSRERSKEQRSRGEVEEKKHKEDKDDRRHRDDKRDSKKEKKHSRSRSRERKHRSRSRSRNAGKRSRSRSKEKSSKHKNESKEKSNKRSRSGSQGRTDSVEKSKKREHSPSKEKSRKRSRSKERSHKRDHSDSKDQSDKHDRRRSQSIEQESQEKQHKNKDETV.

Polar residues predominate over residues 1-14 (MANNSPALTGNSQP). Residues 1 to 40 (MANNSPALTGNSQPQHQAAAAAAQQQQQCGGGGATKPAVS) form a disordered region. N-acetylalanine is present on alanine 2. The residue at position 5 (serine 5) is a Phosphoserine. The segment covering 15–28 (QHQAAAAAAQQQQQ) has biased composition (low complexity). Lysine 227 bears the N6-acetyllysine mark. A disordered region spans residues 229-546 (IDQQIKTRPR…KQHKNKDETV (318 aa)). The segment covering 243 to 255 (DGKEGAEEIDRHV) has biased composition (basic and acidic residues). Residues 256–284 (ERRRSRSPRRSLSPRRSPRRSRSRSHHRE) are compositionally biased toward basic residues. Residues serine 288, serine 290, serine 318, and serine 320 each carry the phosphoserine modification. A compositionally biased stretch (basic and acidic residues) spans 291–327 (FDRELEREKERQRLEREAKEREKERRRSRSIDRGLER). Residues 292 to 321 (DRELEREKERQRLEREAKEREKERRRSRSI) are a coiled coil. The segment covering 328–344 (RRSRSRERHRSRSRSRD) has biased composition (basic residues). A compositionally biased stretch (basic and acidic residues) spans 345 to 421 (RKGDRRDRDR…HRDDKRDSKK (77 aa)). Positions 422–450 (EKKHSRSRSRERKHRSRSRSRNAGKRSRS) are enriched in basic residues. At serine 448 the chain carries Phosphoserine. Positions 451–468 (RSKEKSSKHKNESKEKSN) are enriched in basic and acidic residues. Phosphoserine is present on residues serine 473, serine 475, and serine 481. Residues 480 to 495 (DSVEKSKKREHSPSKE) are compositionally biased toward basic and acidic residues. Positions 496–510 (KSRKRSRSKERSHKR) are enriched in basic residues. Positions 511–546 (DHSDSKDQSDKHDRRRSQSIEQESQEKQHKNKDETV) are enriched in basic and acidic residues. Serine 527, serine 529, and serine 534 each carry phosphoserine.

This sequence belongs to the PRP38 family.

It is found in the nucleus. In terms of biological role, may be required for pre-mRNA splicing. The sequence is that of Pre-mRNA-splicing factor 38B (PRPF38B) from Homo sapiens (Human).